Here is a 505-residue protein sequence, read N- to C-terminus: Aspartyl/glutamyl-tRNA(Asn/Gln) amidotransferase subunit B (505 aa).

This sequence belongs to the GatB/GatE family. GatB subfamily. As to quaternary structure, heterotrimer of A, B and C subunits.

The catalysed reaction is L-glutamyl-tRNA(Gln) + L-glutamine + ATP + H2O = L-glutaminyl-tRNA(Gln) + L-glutamate + ADP + phosphate + H(+). It catalyses the reaction L-aspartyl-tRNA(Asn) + L-glutamine + ATP + H2O = L-asparaginyl-tRNA(Asn) + L-glutamate + ADP + phosphate + 2 H(+). In terms of biological role, allows the formation of correctly charged Asn-tRNA(Asn) or Gln-tRNA(Gln) through the transamidation of misacylated Asp-tRNA(Asn) or Glu-tRNA(Gln) in organisms which lack either or both of asparaginyl-tRNA or glutaminyl-tRNA synthetases. The reaction takes place in the presence of glutamine and ATP through an activated phospho-Asp-tRNA(Asn) or phospho-Glu-tRNA(Gln). The protein is Aspartyl/glutamyl-tRNA(Asn/Gln) amidotransferase subunit B of Corynebacterium jeikeium (strain K411).